Consider the following 113-residue polypeptide: Non-specific lipid-transfer protein (113 aa).

Positions 1–24 (AQVMLMAVALVLMLAAVPRAAVAI) are cleaved as a signal peptide. Cystine bridges form between cysteine 26–cysteine 73, cysteine 36–cysteine 50, cysteine 51–cysteine 96, and cysteine 71–cysteine 110. The Cis-14-hydroxy-10,13-dioxo-7-heptadecenoic acid aspartate ester moiety is linked to residue aspartate 30.

It belongs to the plant LTP family.

Functionally, plant non-specific lipid-transfer proteins transfer phospholipids as well as galactolipids across membranes. May play a role in wax or cutin deposition in the cell walls of expanding epidermal cells and certain secretory tissues. This Triticum aestivum (Wheat) protein is Non-specific lipid-transfer protein.